Consider the following 368-residue polypeptide: Uroporphyrinogen decarboxylase (368 aa).

Residues 41-45, Asp-91, Tyr-168, Ser-223, and His-345 contribute to the substrate site; that span reads RQAGR.

Belongs to the uroporphyrinogen decarboxylase family. As to quaternary structure, homodimer.

The protein resides in the cytoplasm. It catalyses the reaction uroporphyrinogen III + 4 H(+) = coproporphyrinogen III + 4 CO2. It participates in porphyrin-containing compound metabolism; protoporphyrin-IX biosynthesis; coproporphyrinogen-III from 5-aminolevulinate: step 4/4. Functionally, catalyzes the decarboxylation of four acetate groups of uroporphyrinogen-III to yield coproporphyrinogen-III. The sequence is that of Uroporphyrinogen decarboxylase from Psychrobacter sp. (strain PRwf-1).